The chain runs to 429 residues: Adenylosuccinate synthetase (429 aa).

GTP-binding positions include 12-18 (GDEGKGK) and 40-42 (GHT). Asp-13 functions as the Proton acceptor in the catalytic mechanism. Mg(2+) is bound by residues Asp-13 and Gly-40. Residues 13–16 (DEGK), 38–41 (NAGH), Thr-129, Arg-143, Gln-224, Thr-239, and Arg-303 contribute to the IMP site. His-41 acts as the Proton donor in catalysis. 299–305 (ATTGRRR) lines the substrate pocket. GTP-binding positions include Arg-305, 331 to 333 (KLD), and 413 to 415 (SVG).

This sequence belongs to the adenylosuccinate synthetase family. In terms of assembly, homodimer. It depends on Mg(2+) as a cofactor.

It is found in the cytoplasm. It catalyses the reaction IMP + L-aspartate + GTP = N(6)-(1,2-dicarboxyethyl)-AMP + GDP + phosphate + 2 H(+). Its pathway is purine metabolism; AMP biosynthesis via de novo pathway; AMP from IMP: step 1/2. Its function is as follows. Plays an important role in the de novo pathway of purine nucleotide biosynthesis. Catalyzes the first committed step in the biosynthesis of AMP from IMP. This chain is Adenylosuccinate synthetase, found in Desulforapulum autotrophicum (strain ATCC 43914 / DSM 3382 / VKM B-1955 / HRM2) (Desulfobacterium autotrophicum).